The chain runs to 299 residues: MISNNRLRIAMQKTGRLSDDSKDLLTRCGIKINLHKQKLIAFAENMPIDVMCVRDDDIPGLVMDKVVDIGIIGENVLEEEVLNRQVQLDNCSYTKLKRLDFGICRLSLAVPINIEYNNIHCLNHTRIATSYPHLLKRYCDKKKLTFKSCMLNGSVEVAPRAGLSDAICDLVSTGATLEANGLREVEVIFFSKACVICKTGFISLEKKNVIDKLMTRIQGVIKARESKYIMLHAPIEKLEKVMNLLHGAENPTILKLAGDNTRVAMHMVSSETLFWETMEKLKLLGASSILVLPIEKMME.

It belongs to the ATP phosphoribosyltransferase family. Long subfamily. In terms of assembly, equilibrium between an active dimeric form, an inactive hexameric form and higher aggregates. Interconversion between the various forms is largely reversible and is influenced by the natural substrates and inhibitors of the enzyme. It depends on Mg(2+) as a cofactor.

The protein resides in the cytoplasm. The catalysed reaction is 1-(5-phospho-beta-D-ribosyl)-ATP + diphosphate = 5-phospho-alpha-D-ribose 1-diphosphate + ATP. Its pathway is amino-acid biosynthesis; L-histidine biosynthesis; L-histidine from 5-phospho-alpha-D-ribose 1-diphosphate: step 1/9. Its activity is regulated as follows. Feedback inhibited by histidine. Catalyzes the condensation of ATP and 5-phosphoribose 1-diphosphate to form N'-(5'-phosphoribosyl)-ATP (PR-ATP). Has a crucial role in the pathway because the rate of histidine biosynthesis seems to be controlled primarily by regulation of HisG enzymatic activity. This Buchnera aphidicola subsp. Baizongia pistaciae (strain Bp) protein is ATP phosphoribosyltransferase.